Consider the following 416-residue polypeptide: Nucleoside transporter 1 (416 aa).

Basic and acidic residues predominate over residues 1 to 26; the sequence is MSISKESSKTMIDIEKKGGEGKDGKG. Residues 1 to 28 form a disordered region; it reads MSISKESSKTMIDIEKKGGEGKDGKGGS. At 1–35 the chain is on the cytoplasmic side; sequence MSISKESSKTMIDIEKKGGEGKDGKGGSKMTKNEQ. The helical transmembrane segment at 36–58 threads the bilayer; that stretch reads FLLPFTFILIGLSSLNVWNTALG. Residues 59 to 64 lie on the Extracellular side of the membrane; the sequence is LNINFK. Residues 65 to 83 form a helical membrane-spanning segment; the sequence is YNTFQITGLVCSSIIALFV. At 84-87 the chain is on the cytoplasmic side; that stretch reads KVPK. Residues 88-107 traverse the membrane as a helical segment; it reads MLLPFALGGLAMLCAGFQIA. Residues 108–119 are Extracellular-facing; that stretch reads HQCFTFEQFDTY. A helical membrane pass occupies residues 120–139; sequence CLIAFIVIGIMAGLAQTIAF. The Cytoplasmic segment spans residues 140-148; sequence SVGTTMEEN. The chain crosses the membrane as a helical span at residues 149–171; that stretch reads MGGYMSAGIGISGVFIFIINLLL. Topologically, residues 172–187 are extracellular; sequence DQIVPDQKKFNVNEAK. A helical transmembrane segment spans residues 188-210; the sequence is LLYLFLICELCLVLAIIFSVCNL. Topologically, residues 211 to 241 are cytoplasmic; that stretch reads ELSSSKTSKEEEYSDKEQGLSYLELLKDSYK. Residues 242–261 traverse the membrane as a helical segment; that stretch reads AILAMFLVNWLSLQLFPGVG. Residues 262-273 are Extracellular-facing; it reads HKKWQESHNISD. Residues 274–292 traverse the membrane as a helical segment; it reads YNVTLIVGMFQVFDFVSRY. The Cytoplasmic portion of the chain corresponds to 293 to 311; that stretch reads PPNLSHMKIFKWFTFSLNK. The chain crosses the membrane as a helical span at residues 312–331; sequence LLLLNFLRLLFIPWFVINAA. At 332–343 the chain is on the extracellular side; sequence CDLPIFTNIVQQ. A helical membrane pass occupies residues 344–366; sequence CVCMAMLAFTNGWFNTVPFLVFV. The Cytoplasmic portion of the chain corresponds to 367–380; it reads QELKKAKKKKDIET. The chain crosses the membrane as a helical span at residues 381–403; the sequence is ISTFLVVAMFVGLFMGIWTTYIY. Over 404 to 416 the chain is Extracellular; the sequence is DFFPIVIKRYVVP.

It belongs to the SLC29A/ENT transporter (TC 2.A.57) family.

It localises to the cell membrane. It catalyses the reaction inosine(in) = inosine(out). It carries out the reaction adenosine(in) = adenosine(out). The enzyme catalyses hypoxanthine(out) = hypoxanthine(in). The catalysed reaction is guanosine(in) = guanosine(out). It catalyses the reaction guanine(out) = guanine(in). It carries out the reaction thymidine(in) = thymidine(out). The enzyme catalyses uridine(out) = uridine(in). The catalysed reaction is uracil(in) = uracil(out). It catalyses the reaction thymine(out) = thymine(in). It carries out the reaction adenine(out) = adenine(in). The enzyme catalyses cytosine(out) = cytosine(in). The catalysed reaction is xanthine(out) = xanthine(in). Functionally, nucleoside and nucleobase transporter with a broad substrate specificity. The chain is Nucleoside transporter 1 from Plasmodium vivax (strain Salvador I).